The chain runs to 26 residues: 83 kDa hypersensitivity protein (26 aa).

A disordered region spans residues 1–26 (FTPEDFISAPRRGEAIPDPKGELAVF). Residues 11-26 (RRGEAIPDPKGELAVF) are compositionally biased toward basic and acidic residues.

The sequence is that of 83 kDa hypersensitivity protein from Trichophyton tonsurans (Scalp ringworm fungus).